Reading from the N-terminus, the 85-residue chain is Depressant insect toxin BmK ITa1 (85 aa).

An N-terminal signal peptide occupies residues 1–21 (MKLFLLLLISASMLIDGLVNA). Positions 22–82 (DGYIRGSNGC…TWKSESNTCG (61 aa)) constitute an LCN-type CS-alpha/beta domain. Disulfide bonds link Cys-31-Cys-81, Cys-35-Cys-56, Cys-42-Cys-63, and Cys-46-Cys-65. Glycine amide is present on Gly-82.

This sequence belongs to the long (4 C-C) scorpion toxin superfamily. Sodium channel inhibitor family. Beta subfamily. In terms of tissue distribution, expressed by the venom gland.

The protein localises to the secreted. Its function is as follows. Depressant insect toxins cause a transient contraction paralysis followed by a slow flaccid paralysis. They bind voltage-independently to sodium channels (Nav) and block action potentials, primarily by depolarizing the axonal membrane and suppressing the sodium current. This chain is Depressant insect toxin BmK ITa1, found in Olivierus martensii (Manchurian scorpion).